Here is a 110-residue protein sequence, read N- to C-terminus: Iron-sulfur cluster assembly protein CyaY (110 aa).

Belongs to the frataxin family.

In terms of biological role, involved in iron-sulfur (Fe-S) cluster assembly. May act as a regulator of Fe-S biogenesis. This Pseudomonas fluorescens (strain Pf0-1) protein is Iron-sulfur cluster assembly protein CyaY.